A 525-amino-acid polypeptide reads, in one-letter code: MPVLPMPPLMQNAVEPMQVDIAPPNEDNENNEEQQIVVENPSIDLEVYANQYAGIVRLHRLIYVADVCPVLAVEALKMAITYVQTTYNVNLYQVLHKRLSDLNAGNAPAPPANAGGDQAGAAAPGPLAAAPLPDIAAQPVAQAQGQAQPAVEKDAFAYDAAWVDTKMKKAALKLEKLDSDLKNYKSNSIKESIRRGHDDLADHYLSCGDLTNALKCYSRARDYCTSGKHVVNMCLNVIKVSIYLQNWAHVMSYISKAESTPDFAEGSKEANAQVHTRLECAAGLAELQQKKYKVAAKHFLNANFDHCDFPEMISTSNVAVYGGLCALATFDRQELKRLVIASTSFKLFLELEPQLRDIIFKFYESKYASCLTLLDEIRDNLLVDMYIAPHVTTLYTKIRNRALIQYFSPYMSADMHKMAMAFNSSVGDLENEVMQLILDGQIQARIDSHNKILFAKEADQRNSTFERALIMGKQYQRHTRMLVLRAAMLKSHIHVKSISREGGSNHGAELCVSAGSSTTAQLARI.

One can recognise a PCI domain in the interval H298–Q460.

Belongs to the CSN1 family. As to quaternary structure, component of the CSN complex, probably composed of CSN1b, alien/CSN2, CSN3, CSN4, CSN5, CSN6, CSN7 and CSN8.

The protein localises to the cytoplasm. Its subcellular location is the nucleus. Functionally, essential component of the COP9 signalosome complex (CSN), a complex involved in various cellular and developmental processes. The CSN complex is an essential regulator of the ubiquitin (Ubl) conjugation pathway by mediating the deneddylation of the cullin subunits of the SCF-type E3 ligase complexes, leading to decrease the Ubl ligase activity of SCF. The CSN complex plays an essential role in oogenesis and embryogenesis and is required for proper photoreceptor R cell differentiation and promote lamina glial cell migration or axon targeting. It also promotes Ubl-dependent degradation of cyclin E (CycE) during early oogenesis. In Drosophila melanogaster (Fruit fly), this protein is COP9 signalosome complex subunit 1b (CSN1b).